The following is a 461-amino-acid chain: Protein FAM124B (461 aa).

Ser-49 is subject to Phosphoserine. Positions 302-346 are disordered; that stretch reads VELPEPGGRPVSDGSSNTWWKSAGGSAQPSSPATESQPQLSSLHL. The span at 323-334 shows a compositional bias: low complexity; the sequence is SAGGSAQPSSPA.

It belongs to the FAM124 family. In terms of assembly, interacts with CHD7 and CHD8.

Its subcellular location is the nucleus. The protein is Protein FAM124B (FAM124B) of Bos taurus (Bovine).